Consider the following 437-residue polypeptide: Diaminopimelate decarboxylase (437 aa).

K81 is modified (N6-(pyridoxal phosphate)lysine). Pyridoxal 5'-phosphate contacts are provided by residues G256 and 298 to 301 (EPGR). Residues R301, R337, and Y341 each coordinate substrate. C366 serves as the catalytic Proton donor. 2 residues coordinate substrate: E367 and Y396. Residue Y396 participates in pyridoxal 5'-phosphate binding.

It belongs to the Orn/Lys/Arg decarboxylase class-II family. LysA subfamily. Homodimer. Pyridoxal 5'-phosphate is required as a cofactor.

The enzyme catalyses meso-2,6-diaminopimelate + H(+) = L-lysine + CO2. It functions in the pathway amino-acid biosynthesis; L-lysine biosynthesis via DAP pathway; L-lysine from DL-2,6-diaminopimelate: step 1/1. In terms of biological role, specifically catalyzes the decarboxylation of meso-diaminopimelate (meso-DAP) to L-lysine. This Actinosynnema pretiosum subsp. auranticum protein is Diaminopimelate decarboxylase.